Consider the following 492-residue polypeptide: MKTNPLVFVVSTAVEKNAGYITQIIGPVLDVAFSPGKLPNIYNSLIVKGQNPAGQEINVTCEVQQLLGNDRVRAVAMSATDGLMRGMKVIDTGAPLSVPVGEVTLGRIFNVLGEPVDNLGPVDAGTTSPIHKSAPAFTQLDTKLSIFETGIKVVDLLAPYRRGGKIGLFGGAGVGKTVLIMELINNIAKAHGGVSVFGGVGERTREGNDLYMEMKESKVINQENISESKVALVYGQMNEPPGARMRVGLTALTMAEYFRDVNKQDVLLFIDNIFRFVQAGSEVSASSGRMPSAVGYQPTLATEMGSLQERITSTKEGSITSIQAVYVPADDLTDPAPATTFAHSDATTVLSRGLAAKGIYPAVDPLDSTSTMLQPWIVGEEHYETAQGVKQTLQRYKELQDIIAILGLDELSEEDRLTVARARKIERFLSQPFFVAEVFTGSPGKYVSLIETIKGFQMILSGELDSLPEQAFYLVGNIDEATAKAATLQVES.

Position 170–177 (Gly170–Thr177) interacts with ATP.

Belongs to the ATPase alpha/beta chains family. In terms of assembly, F-type ATPases have 2 components, CF(1) - the catalytic core - and CF(0) - the membrane proton channel. CF(1) has five subunits: alpha(3), beta(3), gamma(1), delta(1), epsilon(1). CF(0) has four main subunits: a(1), b(1), b'(1) and c(9-12).

The protein resides in the plastid. The protein localises to the chloroplast thylakoid membrane. It carries out the reaction ATP + H2O + 4 H(+)(in) = ADP + phosphate + 5 H(+)(out). Its function is as follows. Produces ATP from ADP in the presence of a proton gradient across the membrane. The catalytic sites are hosted primarily by the beta subunits. This chain is ATP synthase subunit beta, chloroplastic, found in Angiopteris lygodiifolia (Turnip fern).